We begin with the raw amino-acid sequence, 510 residues long: Ankyrin repeat domain-containing protein 13C-A (510 aa).

Positions 1–19 (MTGEKIRSLHKDQKPSKDE) are enriched in basic and acidic residues. Residues 1–35 (MTGEKIRSLHKDQKPSKDEDLLEPDEEATAGGTFT) are disordered. ANK repeat units lie at residues 80-111 (DVYF…QKDS), 112-141 (HGNT…PVKV), and 145-174 (QGWS…QQSR).

It is found in the endoplasmic reticulum membrane. Acts as a molecular chaperone for G protein-coupled receptors, regulating their biogenesis and exit from the ER. The protein is Ankyrin repeat domain-containing protein 13C-A (ankrd13c-a) of Xenopus laevis (African clawed frog).